The primary structure comprises 238 residues: TATA-box-binding protein (238 aa).

A disordered region spans residues 1-58; that stretch reads MDLKLPPTNPTNPQQAKTFMKSIEEDEKNKAEDLDIIKKEDIDEPKQEDTTDGNGGGG. Over residues 27 to 49 the composition is skewed to basic and acidic residues; the sequence is EKNKAEDLDIIKKEDIDEPKQED. 2 repeat units span residues 65–141 and 155–232.

This sequence belongs to the TBP family. Belongs to the TFIID complex together with the TBP-associated factors (TAFs). Binds DNA as monomer.

Its subcellular location is the nucleus. In terms of biological role, general transcription factor that functions at the core of the DNA-binding multiprotein factor TFIID. Binding of TFIID to the TATA box is the initial transcriptional step of the pre-initiation complex (PIC), playing a role in the activation of eukaryotic genes transcribed by RNA polymerase II. The chain is TATA-box-binding protein (TBP1) from Candida albicans (strain SC5314 / ATCC MYA-2876) (Yeast).